Here is a 133-residue protein sequence, read N- to C-terminus: Holo-[acyl-carrier-protein] synthase (133 aa).

Positions 8 and 57 each coordinate Mg(2+).

This sequence belongs to the P-Pant transferase superfamily. AcpS family. Mg(2+) serves as cofactor.

It is found in the cytoplasm. The catalysed reaction is apo-[ACP] + CoA = holo-[ACP] + adenosine 3',5'-bisphosphate + H(+). Functionally, transfers the 4'-phosphopantetheine moiety from coenzyme A to a Ser of acyl-carrier-protein. In Parvibaculum lavamentivorans (strain DS-1 / DSM 13023 / NCIMB 13966), this protein is Holo-[acyl-carrier-protein] synthase.